Consider the following 258-residue polypeptide: Enterotoxin type G (258 aa).

A signal peptide spans 1 to 25 (MKKLSTVIIILILEIVFHNMNYVNA). C116 and C133 form a disulfide bridge.

It belongs to the staphylococcal/streptococcal toxin family.

It is found in the secreted. Staphylococcal enterotoxins cause the intoxication staphylococcal food poisoning syndrome. The illness is characterized by high fever, hypotension, diarrhea, shock, and in some cases death. The sequence is that of Enterotoxin type G (entG) from Staphylococcus aureus (strain N315).